The sequence spans 36 residues: Potassium channel toxin alpha-KTx 11.3 (36 aa).

Cystine bridges form between Cys-8-Cys-27, Cys-13-Cys-33, and Cys-17-Cys-35.

It belongs to the short scorpion toxin superfamily. Potassium channel inhibitor family. Alpha-KTx 11 subfamily. As to expression, expressed by the venom gland.

The protein localises to the secreted. Its function is as follows. Binds and inhibits voltage-sensitive potassium channels. Inhibits the vertebrate potassium channel Kv1.1/KCNA1 with low affinity. In Parabuthus granulatus (Granulated thick-tailed scorpion), this protein is Potassium channel toxin alpha-KTx 11.3.